Consider the following 369-residue polypeptide: Deacetylase EF_0837 (369 aa).

Zn(2+) contacts are provided by His-58, His-60, Lys-152, His-186, His-209, and Asp-270. Residue Lys-152 is modified to N6-carboxylysine.

It belongs to the metallo-dependent hydrolases superfamily. Atu3266/EF_0837 deacetylase family. The cofactor is Zn(2+).

Functionally, esterase that can catalyze the deacetylation of acetyl-(R)-mandelate, but with very low efficiency (in vitro). The sequence is that of Deacetylase EF_0837 from Enterococcus faecalis (strain ATCC 700802 / V583).